The following is a 507-amino-acid chain: Dolichyl pyrophosphate Man9GlcNAc2 alpha-1,3-glucosyltransferase (507 aa).

The Cytoplasmic segment spans residues M1–K3. The helical transmembrane segment at W4–N24 threads the bilayer. Residues S25 to T114 lie on the Lumenal side of the membrane. An N-linked (GlcNAc...) asparagine glycan is attached at N59. The chain crosses the membrane as a helical span at residues T115–L135. Over K136 to K143 the chain is Cytoplasmic. Residues I144–F164 traverse the membrane as a helical segment. Residues Q165 to G172 are Lumenal-facing. A helical transmembrane segment spans residues F173 to F193. Over C194 to K226 the chain is Cytoplasmic. A helical membrane pass occupies residues G227–L247. Topologically, residues P248–Q297 are lumenal. The chain crosses the membrane as a helical span at residues L298–L318. The Cytoplasmic segment spans residues Q319–K323. The helical transmembrane segment at G324 to H344 threads the bilayer. The Lumenal portion of the chain corresponds to E345–E361. A helical membrane pass occupies residues I362 to L382. Residues K383–L387 lie on the Cytoplasmic side of the membrane. A helical transmembrane segment spans residues M388–F408. Over E409–R437 the chain is Lumenal. Residues I438–V458 form a helical membrane-spanning segment. The Cytoplasmic segment spans residues T459–L473. The helical transmembrane segment at V474–V494 threads the bilayer. Over W495–S507 the chain is Lumenal.

It belongs to the ALG6/ALG8 glucosyltransferase family.

The protein localises to the endoplasmic reticulum membrane. The enzyme catalyses an alpha-D-Man-(1-&gt;2)-alpha-D-Man-(1-&gt;2)-alpha-D-Man-(1-&gt;3)-[alpha-D-Man-(1-&gt;2)-alpha-D-Man-(1-&gt;3)-[alpha-D-Man-(1-&gt;2)-alpha-D-Man-(1-&gt;6)]-alpha-D-Man-(1-&gt;6)]-beta-D-Man-(1-&gt;4)-beta-D-GlcNAc-(1-&gt;4)-alpha-D-GlcNAc-diphospho-di-trans,poly-cis-dolichol + a di-trans,poly-cis-dolichyl beta-D-glucosyl phosphate = an alpha-D-Glc-(1-&gt;3)-alpha-D-Man-(1-&gt;2)-alpha-D-Man-(1-&gt;2)-alpha-D-Man-(1-&gt;3)-[alpha-D-Man-(1-&gt;2)-alpha-D-Man-(1-&gt;3)-[alpha-D-Man-(1-&gt;2)-alpha-D-Man-(1-&gt;6)]-alpha-D-Man-(1-&gt;6)]-beta-D-Man-(1-&gt;4)-beta-D-GlcNAc-(1-&gt;4)-alpha-D-GlcNAc-diphospho-di-trans,poly-cis-dolichol + a di-trans,poly-cis-dolichyl phosphate + H(+). Its pathway is protein modification; protein glycosylation. In terms of biological role, dolichyl pyrophosphate Man9GlcNAc2 alpha-1,3-glucosyltransferase that operates in the biosynthetic pathway of dolichol-linked oligosaccharides, the glycan precursors employed in protein asparagine (N)-glycosylation. The assembly of dolichol-linked oligosaccharides begins on the cytosolic side of the endoplasmic reticulum membrane and finishes in its lumen. The sequential addition of sugars to dolichol pyrophosphate produces dolichol-linked oligosaccharides containing fourteen sugars, including two GlcNAcs, nine mannoses and three glucoses. Once assembled, the oligosaccharide is transferred from the lipid to nascent proteins by oligosaccharyltransferases. In the lumen of the endoplasmic reticulum, adds the first glucose residue from dolichyl phosphate glucose (Dol-P-Glc) onto the lipid-linked oligosaccharide intermediate Man(9)GlcNAc(2)-PP-Dol to produce Glc(1)Man(9)GlcNAc(2)-PP-Dol. Glc(1)Man(9)GlcNAc(2)-PP-Dol is a substrate for ALG8, the following enzyme in the biosynthetic pathway. This is Dolichyl pyrophosphate Man9GlcNAc2 alpha-1,3-glucosyltransferase from Pongo abelii (Sumatran orangutan).